We begin with the raw amino-acid sequence, 197 residues long: Cold-regulated 413 plasma membrane protein 1 (197 aa).

Residues 1–40 (MPMKSLRNDHGTLKAMIGSDFNELTIAAKNLATHAFTLTG) are Extracellular-facing. The chain crosses the membrane as a helical span at residues 41 to 61 (LGFGTSVLEWVASIAAIYLLV). Topologically, residues 62-71 (LDRTNWKTNM) are cytoplasmic. Residues 72–92 (LTSLLIPYIFFSLPSLIFGIF) form a helical membrane-spanning segment. Over 93-94 (RG) the chain is Extracellular. A helical membrane pass occupies residues 95–115 (EIGKWIAFVAVVVQLFFPKHA). Over 116-117 (RE) the chain is Cytoplasmic. A helical membrane pass occupies residues 118-138 (YLELPVALVLLAVVAPNLIAG). Residues 139–141 (TFR) are Extracellular-facing. Residues 142–162 (DSWIGLAICLGIGCYLLQEHI) traverse the membrane as a helical segment. The Cytoplasmic segment spans residues 163 to 176 (RASGGFRNAFTKAN). The helical transmembrane segment at 177-197 (GISNTVGIICLVVFPVWALIF) threads the bilayer.

Belongs to the Cold-regulated 413 protein family.

The protein localises to the membrane. This is Cold-regulated 413 plasma membrane protein 1 (COR413PM1) from Arabidopsis thaliana (Mouse-ear cress).